Here is a 139-residue protein sequence, read N- to C-terminus: Ribonuclease VapC36 (139 aa).

Residues 1–127 (MIVDTSAVVA…GNDFPQTDLE (127 aa)) form the PINc domain. Mg(2+) is bound by residues D4 and D100.

It belongs to the PINc/VapC protein family. Mg(2+) is required as a cofactor.

In terms of biological role, toxic component of a type II toxin-antitoxin (TA) system. An RNase. Its cognate antitoxin is VapB36. The protein is Ribonuclease VapC36 of Mycobacterium tuberculosis (strain ATCC 25618 / H37Rv).